The following is a 206-amino-acid chain: Ribosomal RNA large subunit methyltransferase E (206 aa).

Residues glycine 60, tryptophan 62, aspartate 80, aspartate 96, and aspartate 121 each coordinate S-adenosyl-L-methionine. Lysine 161 functions as the Proton acceptor in the catalytic mechanism.

Belongs to the class I-like SAM-binding methyltransferase superfamily. RNA methyltransferase RlmE family.

It localises to the cytoplasm. The enzyme catalyses uridine(2552) in 23S rRNA + S-adenosyl-L-methionine = 2'-O-methyluridine(2552) in 23S rRNA + S-adenosyl-L-homocysteine + H(+). In terms of biological role, specifically methylates the uridine in position 2552 of 23S rRNA at the 2'-O position of the ribose in the fully assembled 50S ribosomal subunit. The polypeptide is Ribosomal RNA large subunit methyltransferase E (Francisella tularensis subsp. holarctica (strain FTNF002-00 / FTA)).